A 421-amino-acid polypeptide reads, in one-letter code: Anthranilate synthase component 1 (421 aa).

L-tryptophan is bound by residues Ser31 and 207–209; that span reads PYM. 242–243 provides a ligand contact to chorismate; the sequence is GT. Mg(2+) is bound at residue Glu269. Chorismate-binding positions include Tyr357, Arg377, 391–393, and Gly393; that span reads GAG. Glu406 serves as a coordination point for Mg(2+).

It belongs to the anthranilate synthase component I family. As to quaternary structure, heterotetramer consisting of two non-identical subunits: a beta subunit (TrpG) and a large alpha subunit (TrpE). The cofactor is Mg(2+).

It catalyses the reaction chorismate + L-glutamine = anthranilate + pyruvate + L-glutamate + H(+). It participates in amino-acid biosynthesis; L-tryptophan biosynthesis; L-tryptophan from chorismate: step 1/5. With respect to regulation, cooperatively feedback inhibited by tryptophan. Functionally, part of a heterotetrameric complex that catalyzes the two-step biosynthesis of anthranilate, an intermediate in the biosynthesis of L-tryptophan. In the first step, the glutamine-binding beta subunit (TrpG) of anthranilate synthase (AS) provides the glutamine amidotransferase activity which generates ammonia as a substrate that, along with chorismate, is used in the second step, catalyzed by the large alpha subunit of AS (TrpE) to produce anthranilate. In the absence of TrpG, TrpE can synthesize anthranilate directly from chorismate and high concentrations of ammonia. The chain is Anthranilate synthase component 1 (trpE) from Saccharolobus solfataricus (strain ATCC 35092 / DSM 1617 / JCM 11322 / P2) (Sulfolobus solfataricus).